A 544-amino-acid chain; its full sequence is Ribosomal oxygenase 1 (544 aa).

Residues 1–78 are disordered; it reads MERKHMSALS…HEGERDCREM (78 aa). The segment covering 10–19 has biased composition (polar residues); the sequence is SIYQSLSGGK. Basic residues predominate over residues 42-53; that stretch reads PSKKATKKKGTK. A compositionally biased stretch (basic and acidic residues) spans 63-78; the sequence is SSEKEKHEGERDCREM. The 146-residue stretch at 197-342 folds into the JmjC domain; it reads CSIRMLNPQA…DLMLKLMPAA (146 aa). The Fe cation site is built by H243, D245, and H308.

Belongs to the ROX family. NO66 subfamily. Requires Fe(2+) as cofactor.

The protein localises to the nucleus. The protein resides in the nucleolus. Its subcellular location is the nucleoplasm. It carries out the reaction N(6),N(6)-dimethyl-L-lysyl(36)-[histone H3] + 2 2-oxoglutarate + 2 O2 = L-lysyl(36)-[histone H3] + 2 formaldehyde + 2 succinate + 2 CO2. The catalysed reaction is N(6)-methyl-L-lysyl-[protein] + 2-oxoglutarate + O2 = L-lysyl-[protein] + formaldehyde + succinate + CO2. The enzyme catalyses L-histidyl-[protein] + 2-oxoglutarate + O2 = (3S)-3-hydroxy-L-histidyl-[protein] + succinate + CO2. Its function is as follows. Oxygenase that can act as both a histone lysine demethylase and a ribosomal histidine hydroxylase. Specifically demethylates 'Lys-4' (H3K4me) and 'Lys-36' (H3K36me) of histone H3, thereby playing a central role in histone code. Preferentially demethylates trimethylated H3 'Lys-4' (H3K4me3) and monomethylated H3 'Lys-4' (H3K4me1) residues, while it has weaker activity for dimethylated H3 'Lys-36' (H3K36me2). Also catalyzes demethylation of non-histone proteins. Also catalyzes the hydroxylation of 60S ribosomal protein L8 on 'His-216', thereby playing a role in ribosome biogenesis. In Danio rerio (Zebrafish), this protein is Ribosomal oxygenase 1 (riox1).